Consider the following 414-residue polypeptide: Esterase FrsA (414 aa).

Belongs to the FrsA family.

It carries out the reaction a carboxylic ester + H2O = an alcohol + a carboxylate + H(+). Catalyzes the hydrolysis of esters. The chain is Esterase FrsA from Shigella sonnei (strain Ss046).